A 291-amino-acid polypeptide reads, in one-letter code: Putative heme-binding peroxidase (291 aa).

H61 functions as the Proton acceptor in the catalytic mechanism. A heme b-binding site is contributed by H185. W201 (tryptophan radical intermediate) is an active-site residue.

This sequence belongs to the peroxidase family. Cytochrome c peroxidase subfamily. Heme b serves as cofactor.

In terms of biological role, destroys radicals which are normally produced within the cells and which are toxic to biological systems. The polypeptide is Putative heme-binding peroxidase (CCP2) (Candida albicans (strain SC5314 / ATCC MYA-2876) (Yeast)).